A 431-amino-acid chain; its full sequence is Histidine--tRNA ligase (431 aa).

Residues 1–20 form a disordered region; the sequence is MALQRPKGTQDHLPDGSPKL.

This sequence belongs to the class-II aminoacyl-tRNA synthetase family. Homodimer.

The protein localises to the cytoplasm. The enzyme catalyses tRNA(His) + L-histidine + ATP = L-histidyl-tRNA(His) + AMP + diphosphate + H(+). This Deinococcus geothermalis (strain DSM 11300 / CIP 105573 / AG-3a) protein is Histidine--tRNA ligase.